We begin with the raw amino-acid sequence, 88 residues long: UPF0298 protein BcerKBAB4_3759 (88 aa).

The protein belongs to the UPF0298 family.

The protein resides in the cytoplasm. This chain is UPF0298 protein BcerKBAB4_3759, found in Bacillus mycoides (strain KBAB4) (Bacillus weihenstephanensis).